We begin with the raw amino-acid sequence, 528 residues long: UDP-glucuronosyltransferase 2A1 (528 aa).

Residues 1–21 (MLKNILLCSLQISLLGMSLGG) form the signal peptide. The Extracellular portion of the chain corresponds to 22–494 (NVLIWPMEGS…FQYHSLDVIG (473 aa)). N-linked (GlcNAc...) asparagine glycosylation occurs at Asn49. Position 135 is an N6-succinyllysine (Lys135). Asn314 carries N-linked (GlcNAc...) asparagine glycosylation. The helical transmembrane segment at 495–515 (FLLACVASAILLVAKCCLFIF) threads the bilayer. At 516–528 (QKVGKTGKKKKRD) the chain is on the cytoplasmic side.

This sequence belongs to the UDP-glycosyltransferase family.

It localises to the membrane. It catalyses the reaction glucuronate acceptor + UDP-alpha-D-glucuronate = acceptor beta-D-glucuronoside + UDP + H(+). The enzyme catalyses 16beta,17beta-estriol + UDP-alpha-D-glucuronate = 16beta,17beta-estriol 16-O-(beta-D-glucuronate) + UDP + H(+). The catalysed reaction is 16alpha,17alpha-estriol + UDP-alpha-D-glucuronate = 16alpha,17alpha-estriol 16-O-(beta-D-glucuronate) + UDP + H(+). It carries out the reaction 17alpha-estradiol + UDP-alpha-D-glucuronate = 17alpha-estradiol 17-O-(beta-D-glucuronate) + UDP + H(+). It catalyses the reaction 17alpha-estradiol + UDP-alpha-D-glucuronate = 17alpha-estradiol 3-O-(beta-D-glucuronate) + UDP + H(+). The enzyme catalyses 17beta-estradiol + UDP-alpha-D-glucuronate = 17beta-estradiol 3-O-(beta-D-glucuronate) + UDP + H(+). The catalysed reaction is 17beta-estradiol + UDP-alpha-D-glucuronate = 17beta-estradiol 17-O-(beta-D-glucuronate) + UDP + H(+). It carries out the reaction testosterone + UDP-alpha-D-glucuronate = testosterone 17-O-(beta-D-glucuronate) + UDP + H(+). It catalyses the reaction epitestosterone + UDP-alpha-D-glucuronate = epitestosterone 17-O-(beta-D-glucuronate) + UDP + H(+). The enzyme catalyses lithocholate + UDP-alpha-D-glucuronate = lithocholoyl-3-O-(beta-D-glucuronate) + UDP + H(+). The catalysed reaction is lithocholate + UDP-alpha-D-glucuronate = lithocholoyl-24-O-(beta-D-glucuronate) + UDP. It carries out the reaction deoxycholate + UDP-alpha-D-glucuronate = deoxycholoyl-24-O-(beta-D-glucuronate) + UDP. It catalyses the reaction hyodeoxycholate + UDP-alpha-D-glucuronate = hyodeoxycholate 6-O-(beta-D-glucuronate) + UDP + H(+). The enzyme catalyses hyocholate + UDP-alpha-D-glucuronate = hyocholoyl-24-O-(beta-D-glucuronate) + UDP. Functionally, UDP-glucuronosyltransferase (UGT) that catalyzes phase II biotransformation reactions in which lipophilic substrates are conjugated with glucuronic acid to increase the metabolite's water solubility, thereby facilitating excretion into either the urine or bile. Essential for the elimination and detoxification of drugs, xenobiotics and endogenous compounds. Catalyzes the glucuronidation of endogenous steroid hormones such as androgens (testosterones) and estrogens (estradiol and estriol). Contributes to bile acid (BA) detoxification by catalyzing the glucuronidation of BA substrates, which are natural detergents for dietary lipids absorption. Shows a high affinity to aliphatic odorants such as citronellol as well as olfactory tissue specificity, and therefore may be involved in olfaction. The chain is UDP-glucuronosyltransferase 2A1 from Mus musculus (Mouse).